Consider the following 259-residue polypeptide: 3-oxo-5-alpha-steroid 4-dehydrogenase 1 (259 aa).

Helical transmembrane passes span 12-29 (LLAALAYLQCAVGCAVFA), 86-106 (ILLAMFLVHYGHRCLIYPFLM), 111-131 (PMPLLACTMAIMFCTCNGYLQ), 151-171 (FLIGFGLWLTGMLINIHSDHI), and 209-229 (YALASWSVQGAAFAFFTFCFL).

This sequence belongs to the steroid 5-alpha reductase family. In terms of tissue distribution, liver and prostate (at a low level).

The protein localises to the microsome membrane. It localises to the endoplasmic reticulum membrane. It carries out the reaction a 3-oxo-5alpha-steroid + NADP(+) = a 3-oxo-Delta(4)-steroid + NADPH + H(+). It catalyses the reaction androst-4-ene-3,17-dione + NADPH + H(+) = 5alpha-androstan-3,17-dione + NADP(+). The enzyme catalyses 5alpha-pregnane-3,20-dione + NADP(+) = progesterone + NADPH + H(+). The catalysed reaction is 17beta-hydroxy-5alpha-androstan-3-one + NADP(+) = testosterone + NADPH + H(+). Functionally, converts testosterone into 5-alpha-dihydrotestosterone and progesterone or corticosterone into their corresponding 5-alpha-3-oxosteroids. It plays a central role in sexual differentiation and androgen physiology. In Homo sapiens (Human), this protein is 3-oxo-5-alpha-steroid 4-dehydrogenase 1.